The sequence spans 217 residues: Large ribosomal subunit protein uL1 (217 aa).

Ser-2 bears the N-acetylserine mark. Phosphotyrosine is present on Tyr-11. N6-acetyllysine occurs at positions 91 and 106. Position 118 is an N6-acetyllysine; alternate (Lys-118). A Glycyl lysine isopeptide (Lys-Gly) (interchain with G-Cter in SUMO1); alternate cross-link involves residue Lys-118. A Glycyl lysine isopeptide (Lys-Gly) (interchain with G-Cter in SUMO2); alternate cross-link involves residue Lys-118. A Glycyl lysine isopeptide (Lys-Gly) (interchain with G-Cter in SUMO2) cross-link involves residue Lys-161.

The protein belongs to the universal ribosomal protein uL1 family. Component of the large ribosomal subunit.

It is found in the cytoplasm. Component of the large ribosomal subunit. The ribosome is a large ribonucleoprotein complex responsible for the synthesis of proteins in the cell. This is Large ribosomal subunit protein uL1 (RPL10A) from Bos taurus (Bovine).